A 185-amino-acid chain; its full sequence is Regulator of rDNA transcription protein 13 (185 aa).

3 WD repeats span residues 9–48 (GHTD…NNGE), 71–108 (GHRA…LKHF), and 111–148 (HTQL…LVRS).

May be involved in the modulation of rDNA transcription. The polypeptide is Regulator of rDNA transcription protein 13 (RRT13) (Saccharomyces cerevisiae (strain ATCC 204508 / S288c) (Baker's yeast)).